The primary structure comprises 826 residues: Protein FAM171B (826 aa).

The N-terminal stretch at 1 to 32 (MARLCRRVPCTLLLGLAVVLLKARLVPAAARA) is a signal peptide. Topologically, residues 33–353 (ELSRSDLSLI…DSKDITAYHT (321 aa)) are extracellular. The disordered stretch occupies residues 52 to 71 (QQQQQKQLEEAEEERTEVPG). Asparagine 108, asparagine 113, asparagine 213, and asparagine 268 each carry an N-linked (GlcNAc...) asparagine glycan. The helical transmembrane segment at 354-374 (VFLTAILGGTIVIVIGFFAVL) threads the bilayer. Over 375–826 (LCYCRDKCGT…REERPLIPIN (452 aa)) the chain is Cytoplasmic. 3 disordered regions span residues 429 to 448 (NAKN…AETE), 474 to 493 (QNNY…GSKQ), and 774 to 826 (HPGE…IPIN). A compositionally biased stretch (basic and acidic residues) spans 438 to 448 (QKKEPSKAETE). The segment covering 474–486 (QNNYSRNPTQSLE) has biased composition (polar residues). Over residues 774–786 (HPGEESPGRKSTV) the composition is skewed to basic and acidic residues. Serine 794 carries the post-translational modification Phosphoserine. Basic and acidic residues predominate over residues 805–826 (AKRDSKTNIWKKREERPLIPIN).

The protein belongs to the FAM171 family.

It localises to the cytoplasmic granule. Its subcellular location is the membrane. This chain is Protein FAM171B (FAM171B), found in Homo sapiens (Human).